The following is a 138-amino-acid chain: Gonadotropin subunit beta-2 (138 aa).

Positions 1–21 (MPASSYFLLFFFMNFFSPAQS) are cleaved as a signal peptide. 6 cysteine pairs are disulfide-bonded: cysteine 27/cysteine 75, cysteine 41/cysteine 90, cysteine 44/cysteine 128, cysteine 52/cysteine 106, cysteine 56/cysteine 108, and cysteine 111/cysteine 118. Residue asparagine 31 is glycosylated (N-linked (GlcNAc...) asparagine).

It belongs to the glycoprotein hormones subunit beta family. Heterodimer of an alpha and a beta chain.

The protein resides in the secreted. In terms of biological role, involved in gametogenesis and steroidogenesis. The polypeptide is Gonadotropin subunit beta-2 (cgbb) (Clarias gariepinus (North African catfish)).